We begin with the raw amino-acid sequence, 249 residues long: Carboxy-S-adenosyl-L-methionine synthase (249 aa).

S-adenosyl-L-methionine-binding positions include Tyr-39, 64 to 66 (GCS), 117 to 118 (DI), Asn-132, and Arg-199.

It belongs to the class I-like SAM-binding methyltransferase superfamily. Cx-SAM synthase family. In terms of assembly, homodimer.

It catalyses the reaction prephenate + S-adenosyl-L-methionine = carboxy-S-adenosyl-L-methionine + 3-phenylpyruvate + H2O. Its function is as follows. Catalyzes the conversion of S-adenosyl-L-methionine (SAM) to carboxy-S-adenosyl-L-methionine (Cx-SAM). The chain is Carboxy-S-adenosyl-L-methionine synthase from Aeromonas hydrophila subsp. hydrophila (strain ATCC 7966 / DSM 30187 / BCRC 13018 / CCUG 14551 / JCM 1027 / KCTC 2358 / NCIMB 9240 / NCTC 8049).